The primary structure comprises 151 residues: 3-hydroxyacyl-[acyl-carrier-protein] dehydratase FabZ (151 aa).

Residue His54 is part of the active site.

The protein belongs to the thioester dehydratase family. FabZ subfamily. Oligomer. Post-translationally, the N-terminus is blocked.

The protein resides in the cytoplasm. The enzyme catalyses a (3R)-hydroxyacyl-[ACP] = a (2E)-enoyl-[ACP] + H2O. Functionally, involved in unsaturated fatty acids biosynthesis. Catalyzes the dehydration of short chain beta-hydroxyacyl-ACPs and long chain saturated and unsaturated beta-hydroxyacyl-ACPs. This chain is 3-hydroxyacyl-[acyl-carrier-protein] dehydratase FabZ, found in Escherichia coli (strain SE11).